We begin with the raw amino-acid sequence, 88 residues long: Cell division topological specificity factor (88 aa).

The protein belongs to the MinE family.

Its function is as follows. Prevents the cell division inhibition by proteins MinC and MinD at internal division sites while permitting inhibition at polar sites. This ensures cell division at the proper site by restricting the formation of a division septum at the midpoint of the long axis of the cell. The chain is Cell division topological specificity factor from Methylibium petroleiphilum (strain ATCC BAA-1232 / LMG 22953 / PM1).